Here is a 775-residue protein sequence, read N- to C-terminus: 5-methyltetrahydropteroyltriglutamate--homocysteine methyltransferase (775 aa).

Residues 15–18 (RELK) and Lys118 contribute to the 5-methyltetrahydropteroyltri-L-glutamate site. Residues 448–450 (IGS) and Glu501 contribute to the L-homocysteine site. L-methionine contacts are provided by residues 448–450 (IGS) and Glu501. 5-methyltetrahydropteroyltri-L-glutamate contacts are provided by residues 532-533 (RC) and Trp578. Asp616 contacts L-homocysteine. Residue Asp616 participates in L-methionine binding. Residue Glu622 participates in 5-methyltetrahydropteroyltri-L-glutamate binding. Zn(2+) is bound by residues His658, Cys660, and Glu682. His711 acts as the Proton donor in catalysis. Position 743 (Cys743) interacts with Zn(2+).

This sequence belongs to the vitamin-B12 independent methionine synthase family. Requires Zn(2+) as cofactor.

The enzyme catalyses 5-methyltetrahydropteroyltri-L-glutamate + L-homocysteine = tetrahydropteroyltri-L-glutamate + L-methionine. It functions in the pathway amino-acid biosynthesis; L-methionine biosynthesis via de novo pathway; L-methionine from L-homocysteine (MetE route): step 1/1. Catalyzes the transfer of a methyl group from 5-methyltetrahydrofolate to homocysteine resulting in methionine formation. The sequence is that of 5-methyltetrahydropteroyltriglutamate--homocysteine methyltransferase from Cytophaga hutchinsonii (strain ATCC 33406 / DSM 1761 / CIP 103989 / NBRC 15051 / NCIMB 9469 / D465).